A 124-amino-acid polypeptide reads, in one-letter code: Mitochondrial import inner membrane translocase subunit TIM16 (124 aa).

The J-like stretch occupies residues 58–109; the sequence is EAQQILNISKLSPEEVQNYEHLFKVNDKSVGDSFYLQSKVVRAKERLDEELQ. Position 69 is a phosphoserine (serine 69).

The protein belongs to the TIM16/PAM16 family. In terms of assembly, probable component of the PAM complex at least composed of a mitochondrial HSP70 protein, GRPEL1 or GRPEL2, TIMM44, TIMM16/PAM16 and TIMM14/DNAJC19. Interacts with DNAJC19. Directly interacts with DNAJC15; this interaction counteracts DNAJC15-dependent stimulation of HSPA9 ATPase activity. Associates with the TIM23 complex.

The protein localises to the mitochondrion inner membrane. Its function is as follows. Regulates ATP-dependent protein translocation into the mitochondrial matrix. Inhibits DNAJC19 stimulation of HSPA9/Mortalin ATPase activity. This Rattus norvegicus (Rat) protein is Mitochondrial import inner membrane translocase subunit TIM16 (Magmas-ps1).